The chain runs to 132 residues: MYLDPIAELITKINNGRKAHKAEVSFATSKLKTAILELLVKEGYIKSYDIRPTENNKSETVVKLKYKNQTTSSINGFKQISKPGLRIYSTHLNLPKVLNGLGIAIITTSKGVMSDKQARKENVGGEVIAYVW.

Belongs to the universal ribosomal protein uS8 family. Part of the 30S ribosomal subunit. Contacts proteins S5 and S12.

Its function is as follows. One of the primary rRNA binding proteins, it binds directly to 16S rRNA central domain where it helps coordinate assembly of the platform of the 30S subunit. This is Small ribosomal subunit protein uS8 from Ureaplasma urealyticum serovar 10 (strain ATCC 33699 / Western).